Reading from the N-terminus, the 391-residue chain is 5-amino-6-(D-ribitylamino)uracil--L-tyrosine 4-hydroxyphenyl transferase (391 aa).

In terms of domain architecture, Radical SAM core spans 55 to 302; it reads VTYVINRNIN…GAVARIYLGN (248 aa). [4Fe-4S] cluster contacts are provided by cysteine 69, cysteine 73, and cysteine 76.

This sequence belongs to the radical SAM superfamily. CofH family. In terms of assembly, consists of two subunits, CofG and CofH. The cofactor is [4Fe-4S] cluster.

It carries out the reaction 5-amino-6-(D-ribitylamino)uracil + L-tyrosine + S-adenosyl-L-methionine = 5-amino-5-(4-hydroxybenzyl)-6-(D-ribitylimino)-5,6-dihydrouracil + 2-iminoacetate + 5'-deoxyadenosine + L-methionine + H(+). It functions in the pathway cofactor biosynthesis; coenzyme F0 biosynthesis. Catalyzes the radical-mediated synthesis of 5-amino-5-(4-hydroxybenzyl)-6-(D-ribitylimino)-5,6-dihydrouracil from 5-amino-6-(D-ribitylamino)uracil and L-tyrosine. This is 5-amino-6-(D-ribitylamino)uracil--L-tyrosine 4-hydroxyphenyl transferase from Nostoc sp. (strain PCC 7120 / SAG 25.82 / UTEX 2576).